The sequence spans 207 residues: Large ribosomal subunit protein uL18 (207 aa).

This sequence belongs to the universal ribosomal protein uL18 family. As to quaternary structure, part of the 50S ribosomal subunit. Contacts the 5S and 23S rRNAs.

Its function is as follows. This is one of the proteins that bind and probably mediate the attachment of the 5S RNA into the large ribosomal subunit, where it forms part of the central protuberance. The protein is Large ribosomal subunit protein uL18 of Caldivirga maquilingensis (strain ATCC 700844 / DSM 13496 / JCM 10307 / IC-167).